A 307-amino-acid chain; its full sequence is ATP synthase gamma chain (307 aa).

It belongs to the ATPase gamma chain family. In terms of assembly, F-type ATPases have 2 components, CF(1) - the catalytic core - and CF(0) - the membrane proton channel. CF(1) has five subunits: alpha(3), beta(3), gamma(1), delta(1), epsilon(1). CF(0) has three main subunits: a, b and c.

Its subcellular location is the cell membrane. Produces ATP from ADP in the presence of a proton gradient across the membrane. The gamma chain is believed to be important in regulating ATPase activity and the flow of protons through the CF(0) complex. This is ATP synthase gamma chain from Bifidobacterium longum subsp. infantis (strain ATCC 15697 / DSM 20088 / JCM 1222 / NCTC 11817 / S12).